The chain runs to 204 residues: MQDPAAYYQTMMAKQQQQQQPQFAEQEQLKCPRCDSPNTKFCYYNNYNLSQPRHFCKSCRRYWTKGGALRNVPVGGGSRKNATKRSTSSSSSASSPSNSSQNKKTKNPDPDPDPRNSQKPDLDPTRMLYGFPIGDQDVKGMEIGGSFSSLLANNMQLGLGGGGIMLDGSGWDHPGMGLGLRRTEPGNNNNNPWTDLAMNRAEKN.

A disordered region spans residues 1-25; it reads MQDPAAYYQTMMAKQQQQQQPQFAE. The Dof-type zinc finger occupies 29–83; that stretch reads LKCPRCDSPNTKFCYYNNYNLSQPRHFCKSCRRYWTKGGALRNVPVGGGSRKNAT. Zn(2+)-binding residues include C31, C34, C56, and C59. Disordered regions lie at residues 70–128 and 182–204; these read RNVP…TRML and RTEP…AEKN. Residues 84 to 102 are compositionally biased toward low complexity; that stretch reads KRSTSSSSSASSPSNSSQN. Residues 106–124 show a composition bias toward basic and acidic residues; sequence KNPDPDPDPRNSQKPDLDP.

Its subcellular location is the nucleus. Functionally, transcription factor that binds specifically to a 5'-AA[AG]G-3' consensus core sequence. This Arabidopsis thaliana (Mouse-ear cress) protein is Dof zinc finger protein DOF3.1 (DOF3.1).